Here is a 140-residue protein sequence, read N- to C-terminus: Ubiquitin-like protein ATG12 (140 aa).

Residues 1 to 52 (MAEEPQTVLQLPPSSAAGGEGLTDVSPETTTPEPPSSAAVSPGTEEPAGDTK) are disordered. The segment covering 25–42 (VSPETTTPEPPSSAAVSP) has biased composition (low complexity). A Glycyl lysine isopeptide (Gly-Lys) (interchain with K-? in acceptor protein) cross-link involves residue Gly-140.

It belongs to the ATG12 family. In terms of assembly, forms a conjugate with ATG5. Part of the minor complex composed of 4 sets of ATG12-ATG5 and ATG16L1 (400 kDa); this complex interacts with ATG3 leading to disruption of ATG7 interaction and promotion of ATG8-like proteins lipidation. Forms an 800-kDa complex composed of ATG12-ATG5 and ATG16L2. Interacts with DHX58/RIG-1, IFIH1/MDA5 and MAVS/IPS-1 in monomeric form as well as in ATG12-ATG5 conjugate. The interaction with MAVS is further enhanced upon vesicular stomatitis virus (VSV) infection. Interacts with ATG3; this interaction is essential for phosphatidylethanolamine (PE)-conjugated ATG8-like proteins formation. Interacts with ATG7. Interacts with ATG10. Interacts with TECPR1. Interacts with SH3BGRL. The ATG12-ATG5 conjugate interacts with PDCD6IP (via the BRO1 domain); this interaction is bridged by ATG12 and promotes multiple PDCD6IP-mediated functions such as endolysosomal trafficking, macroautophagy and exosome biogenesis. In terms of processing, acetylated by EP300.

The protein localises to the cytoplasm. It is found in the preautophagosomal structure membrane. Ubiquitin-like protein involved in autophagy vesicles formation. Conjugation with ATG5 through a ubiquitin-like conjugating system involving also ATG7 as an E1-like activating enzyme and ATG10 as an E2-like conjugating enzyme, is essential for its function. The ATG12-ATG5 conjugate acts as an E3-like enzyme which is required for lipidation of ATG8 family proteins and their association to the vesicle membranes. The ATG12-ATG5 conjugate also negatively regulates the innate antiviral immune response by blocking the type I IFN production pathway through direct association with RARRES3 and MAVS. Also plays a role in translation or delivery of incoming viral RNA to the translation apparatus. As part of the ATG8 conjugation system with ATG5 and ATG16L1, required for recruitment of LRRK2 to stressed lysosomes and induction of LRRK2 kinase activity in response to lysosomal stress. The sequence is that of Ubiquitin-like protein ATG12 from Pongo abelii (Sumatran orangutan).